The chain runs to 347 residues: Metacaspase-2 (347 aa).

Residues 1-55 (MCSLITQLCDAGQLADYVGLGWLNAVSSQPYLVQALGLQPPPRRVDVDAAFRDAK) constitute a propeptide that is removed on maturation. The interval 1-70 (MCSLITQLCD…QPWVATPLPG (70 aa)) is regulates substrate access to the active site. His158 is a catalytic residue. Residues Asp173, Asp189, and Asp190 each contribute to the Ca(2+) site. Cys213 is an active-site residue. Residue Asp220 coordinates Ca(2+).

This sequence belongs to the peptidase C14B family. As to quaternary structure, monomer. Post-translationally, auto-proteolytic cleavage of the propeptide after Lys-55 and between the large and small subunits after Lys-268 is required for catalytic activity towards large protein substrates but is dispensable towards small oligopeptide substrates. After processing, the propeptide and the large and small subunits remain associated by non-covalent bonds. In vivo, the unprocessed enzyme appears to be the predominant form.

Its subcellular location is the recycling endosome. With respect to regulation, activated by Ca(2+). In response to calcium binding, the 280-loop, a disordered loop consisting of residues 269-275, undergoes a conformational change which stabilizes substrates in the active site. The binding to the substrate triggers the release of the N-terminal region resulting in the activation of the enzyme. Proteolytic cleavage is required for catalytic activity towards large protein substrates. Its function is as follows. Cysteine protease that cleaves specifically after arginine or lysine residues. In Trypanosoma brucei brucei (strain 927/4 GUTat10.1), this protein is Metacaspase-2.